The following is a 142-amino-acid chain: 3-hydroxyacyl-[acyl-carrier-protein] dehydratase FabZ (142 aa).

H50 is an active-site residue.

It belongs to the thioester dehydratase family. FabZ subfamily.

It localises to the cytoplasm. It catalyses the reaction a (3R)-hydroxyacyl-[ACP] = a (2E)-enoyl-[ACP] + H2O. In terms of biological role, involved in unsaturated fatty acids biosynthesis. Catalyzes the dehydration of short chain beta-hydroxyacyl-ACPs and long chain saturated and unsaturated beta-hydroxyacyl-ACPs. This is 3-hydroxyacyl-[acyl-carrier-protein] dehydratase FabZ from Clostridium tetani (strain Massachusetts / E88).